Here is a 459-residue protein sequence, read N- to C-terminus: Exodeoxyribonuclease 7 large subunit (459 aa).

Belongs to the XseA family. Heterooligomer composed of large and small subunits.

The protein resides in the cytoplasm. It carries out the reaction Exonucleolytic cleavage in either 5'- to 3'- or 3'- to 5'-direction to yield nucleoside 5'-phosphates.. Bidirectionally degrades single-stranded DNA into large acid-insoluble oligonucleotides, which are then degraded further into small acid-soluble oligonucleotides. The protein is Exodeoxyribonuclease 7 large subunit of Pseudomonas entomophila (strain L48).